We begin with the raw amino-acid sequence, 666 residues long: Non-receptor tyrosine-protein kinase TNK1 (666 aa).

Phosphoserine is present on residues serine 60 and serine 96. The 262-residue stretch at 116–377 (VCRGELLGSG…PSFSHLEGLL (262 aa)) folds into the Protein kinase domain. ATP-binding positions include 122-130 (LGSGCFGVV) and lysine 148. Aspartate 245 functions as the Proton acceptor in the catalytic mechanism. Phosphoserine is present on residues serine 255 and serine 411. In terms of domain architecture, SH3 spans 380 to 445 (AGPSEACCVR…PASAVTLADA (66 aa)). The disordered stretch occupies residues 446-493 (GGLPATRPVHRGTPARGDQHPGSIDGDRKKANLWDAPPARGQRRNMPL). Serine 502 is modified (phosphoserine). Residues 506–579 (VLSLGPRPTG…MGMPGARKAA (74 aa)) form a disordered region. Threonine 514 is subject to Phosphothreonine. A Phosphoserine modification is found at serine 519. Positions 531–541 (QGPPGLPPRPP) are enriched in pro residues. A compositionally biased stretch (low complexity) spans 542-552 (LSSSSPQPSQP). Serine 582 carries the phosphoserine modification.

Belongs to the protein kinase superfamily. Tyr protein kinase family. Interacts with the SH3 domain of PLCG1 via its Pro-rich domain. Autophosphorylated on tyrosine residues. As to expression, expressed in all umbilical cord blood, bone marrow and adult blood cell sub-populations and in several leukemia cell lines. Highly expressed in fetal blood, brain, lung, liver and kidney. Detected at lower levels in adult prostate, testis, ovary, small intestine and colon. Not expressed in adult lung, liver, kidney or brain.

Its subcellular location is the cytoplasm. It localises to the membrane. The catalysed reaction is L-tyrosyl-[protein] + ATP = O-phospho-L-tyrosyl-[protein] + ADP + H(+). Functionally, involved in negative regulation of cell growth. Has tumor suppressor properties. Plays a negative regulatory role in the Ras-MAPK pathway. May function in signaling pathways utilized broadly during fetal development and more selectively in adult tissues and in cells of the lymphohematopoietic system. Could specifically be involved in phospholipid signal transduction. The chain is Non-receptor tyrosine-protein kinase TNK1 from Homo sapiens (Human).